The primary structure comprises 250 residues: 3-deoxy-manno-octulosonate cytidylyltransferase (250 aa).

It belongs to the KdsB family.

It localises to the cytoplasm. It carries out the reaction 3-deoxy-alpha-D-manno-oct-2-ulosonate + CTP = CMP-3-deoxy-beta-D-manno-octulosonate + diphosphate. The protein operates within nucleotide-sugar biosynthesis; CMP-3-deoxy-D-manno-octulosonate biosynthesis; CMP-3-deoxy-D-manno-octulosonate from 3-deoxy-D-manno-octulosonate and CTP: step 1/1. It participates in bacterial outer membrane biogenesis; lipopolysaccharide biosynthesis. Functionally, activates KDO (a required 8-carbon sugar) for incorporation into bacterial lipopolysaccharide in Gram-negative bacteria. The protein is 3-deoxy-manno-octulosonate cytidylyltransferase of Herminiimonas arsenicoxydans.